Here is a 328-residue protein sequence, read N- to C-terminus: DhaKLM operon coactivator DhaQ (328 aa).

In terms of domain architecture, DhaK spans 6-328; the sequence is STNEIPEEML…LNVPTGAFAW (323 aa). At His215 the chain carries Tele-(1,2,3-trihydroxypropan-2-yl)histidine.

In terms of assembly, homodimer. Interacts with a homodimer of DhaS.

Its function is as follows. Coactivator for the transcription factor DhaS. The heterotetramer formed by DhaQ and DhaS functions as a transcriptional regulator. Activated by covalent binding of dihydroxyacetone to DhaQ. The complex activates the dhaKLM operon. The sequence is that of DhaKLM operon coactivator DhaQ (dhaQ) from Lactococcus lactis subsp. lactis (strain IL1403) (Streptococcus lactis).